The sequence spans 438 residues: tRNA-dihydrouridine(16/17) synthase [NAD(P)(+)]-like (438 aa).

Residues 23–25 (PMV) and Q79 contribute to the FMN site. The active-site Proton donor is C108. FMN is bound by residues K147, H175, 208–210 (NGN), and 232–233 (AE). Residues 343–387 (GPKEGSKENSSGRSKRALEEEEGSMEGLSKNKLKKQLRNPHKTFD) form a disordered region. The segment covering 373–383 (NKLKKQLRNPH) has biased composition (basic residues).

Belongs to the Dus family. Dus1 subfamily. Requires FMN as cofactor.

It is found in the cytoplasm. The protein localises to the nucleus. The catalysed reaction is 5,6-dihydrouridine(16) in tRNA + NADP(+) = uridine(16) in tRNA + NADPH + H(+). It catalyses the reaction 5,6-dihydrouridine(16) in tRNA + NAD(+) = uridine(16) in tRNA + NADH + H(+). It carries out the reaction 5,6-dihydrouridine(17) in tRNA + NAD(+) = uridine(17) in tRNA + NADH + H(+). The enzyme catalyses 5,6-dihydrouridine(17) in tRNA + NADP(+) = uridine(17) in tRNA + NADPH + H(+). In terms of biological role, catalyzes the synthesis of dihydrouridine, a modified base found in the D-loop of most tRNAs. Specifically modifies U16 and U17 in cytoplasmic tRNAs. Affects the level of some mature tRNA and thereby the total cellular translation. This Rattus norvegicus (Rat) protein is tRNA-dihydrouridine(16/17) synthase [NAD(P)(+)]-like (Dus1l).